We begin with the raw amino-acid sequence, 460 residues long: U-box domain-containing protein 9 (460 aa).

One can recognise a U-box domain in the interval 73–147 (SCPEEFRCPL…SKWCKKNGLE (75 aa)). ARM repeat units lie at residues 201-244 (TEFR…NISI), 248-287 (SNKKLVCENPNVIPLLIDALRRGTVATRSNAAAAIFTLSA), and 289-328 (DSNKVLIGKSGILKPLIDLLEEGNPLAIKDVAAAIFTLCI).

Binds to SD11, SD16, SD17, SD18, SD113, SD129 and SD25. Phosphorylated by SD1-6 and SD1-7.

It is found in the nucleus. It localises to the cell membrane. It catalyses the reaction S-ubiquitinyl-[E2 ubiquitin-conjugating enzyme]-L-cysteine + [acceptor protein]-L-lysine = [E2 ubiquitin-conjugating enzyme]-L-cysteine + N(6)-ubiquitinyl-[acceptor protein]-L-lysine.. It functions in the pathway protein modification; protein ubiquitination. Functions as an E3 ubiquitin ligase. May be involved in the abscisic acid-mediated signaling pathway, at least during germination. The chain is U-box domain-containing protein 9 (PUB9) from Arabidopsis thaliana (Mouse-ear cress).